The chain runs to 132 residues: Ribosome-binding factor A (132 aa).

It belongs to the RbfA family. As to quaternary structure, monomer. Binds 30S ribosomal subunits, but not 50S ribosomal subunits or 70S ribosomes.

The protein resides in the cytoplasm. Functionally, one of several proteins that assist in the late maturation steps of the functional core of the 30S ribosomal subunit. Associates with free 30S ribosomal subunits (but not with 30S subunits that are part of 70S ribosomes or polysomes). Required for efficient processing of 16S rRNA. May interact with the 5'-terminal helix region of 16S rRNA. This is Ribosome-binding factor A from Caldicellulosiruptor bescii (strain ATCC BAA-1888 / DSM 6725 / KCTC 15123 / Z-1320) (Anaerocellum thermophilum).